Here is a 163-residue protein sequence, read N- to C-terminus: Type-2 ice-structuring protein (163 aa).

Residues 1-17 (MLTVSLLVCAMMALTQA) form the signal peptide. Positions 18–34 (NDDKILKGTATEAGPVS) are excised as a propeptide. The C-type lectin domain maps to 39-163 (PNCPAGWQPL…SHKSVCAMTF (125 aa)). Cystine bridges form between Cys41–Cys52, Cys69–Cys159, Cys103–Cys134, Cys123–Cys145, and Cys135–Cys151.

The N-terminus is blocked.

The protein resides in the secreted. In terms of biological role, antifreeze proteins lower the blood freezing point. The chain is Type-2 ice-structuring protein from Hemitripterus americanus (Sea raven).